A 1072-amino-acid chain; its full sequence is DNA-directed RNA polymerase subunit beta (1072 aa).

This sequence belongs to the RNA polymerase beta chain family. As to quaternary structure, in plastids the minimal PEP RNA polymerase catalytic core is composed of four subunits: alpha, beta, beta', and beta''. When a (nuclear-encoded) sigma factor is associated with the core the holoenzyme is formed, which can initiate transcription.

The protein localises to the plastid. The protein resides in the chloroplast. The enzyme catalyses RNA(n) + a ribonucleoside 5'-triphosphate = RNA(n+1) + diphosphate. Its function is as follows. DNA-dependent RNA polymerase catalyzes the transcription of DNA into RNA using the four ribonucleoside triphosphates as substrates. This chain is DNA-directed RNA polymerase subunit beta, found in Oenothera elata subsp. hookeri (Hooker's evening primrose).